The sequence spans 489 residues: Probable cytochrome P450 522A1 (489 aa).

Residues 1–21 (MILTIVIIILTVIFVNKYLLN) traverse the membrane as a helical segment. C433 serves as a coordination point for heme.

Belongs to the cytochrome P450 family. Heme serves as cofactor.

Its subcellular location is the membrane. This chain is Probable cytochrome P450 522A1 (cyp522A1), found in Dictyostelium discoideum (Social amoeba).